A 66-amino-acid polypeptide reads, in one-letter code: uncharacterized protein (66 aa).

This is an uncharacterized protein from Chlamydia pneumoniae (Chlamydophila pneumoniae).